A 948-amino-acid chain; its full sequence is 3-hydroxy-3-methylglutaryl-coenzyme A reductase (948 aa).

The next 6 helical transmembrane spans lie at L9–I25, V55–C71, L96–V112, T124–L140, I207–I223, and C286–L302. N316 carries an N-linked (GlcNAc...) asparagine glycan. A helical transmembrane segment spans residues V347–F363. The segment at K364–L466 is linker. The N-linked (GlcNAc...) asparagine glycan is linked to N430. The interval G467–M948 is catalytic. Catalysis depends on charge relay system residues E567, K699, and D777. The Proton donor role is filled by H869. N895 carries an N-linked (GlcNAc...) asparagine glycan.

Belongs to the HMG-CoA reductase family.

The protein localises to the endoplasmic reticulum membrane. It is found in the peroxisome membrane. It catalyses the reaction (R)-mevalonate + 2 NADP(+) + CoA = (3S)-3-hydroxy-3-methylglutaryl-CoA + 2 NADPH + 2 H(+). The protein operates within metabolic intermediate biosynthesis; (R)-mevalonate biosynthesis; (R)-mevalonate from acetyl-CoA: step 3/3. Its function is as follows. This transmembrane glycoprotein is involved in the control of cholesterol and nonsterol isoprenoid compounds biosynthesis. It is the rate-limiting enzyme of sterol biosynthesis. The chain is 3-hydroxy-3-methylglutaryl-coenzyme A reductase from Schistosoma mansoni (Blood fluke).